Here is an 82-residue protein sequence, read N- to C-terminus: Toxin GTx1-15 (82 aa).

An N-terminal signal peptide occupies residues 1–21 (MKTSVVFVIAGLALLSVACYA). Residues 22–46 (SELKEQSSINEVLSTIFHFEQPEER) constitute a propeptide that is removed on maturation. 3 disulfide bridges follow: cysteine 48–cysteine 63, cysteine 55–cysteine 69, and cysteine 62–cysteine 76. A Phenylalanine amide modification is found at phenylalanine 80.

This sequence belongs to the neurotoxin 10 (Hwtx-1) family. 08 (Gtx1-15) subfamily. In terms of tissue distribution, expressed by the venom gland.

It is found in the secreted. Its function is as follows. Potent voltage-gated sodium channel blocker. Potently inhibits the voltage-gated sodium channels Nav1.7/SCN9A (IC(50)=0.58-10 nM). Shows a moderate activity on Nav1.1/SCN1A (IC(50)=6 nM), Nav1.2/SCN2A (IC(50)=5-128 nM), Nav1.3/SCN3A (IC(50)=20.3-170 nM), and Nav1.6/SCN8A (IC(50)=17-20.1 nM). Shows an unclear inhibition of Nav1.4/SCN4A (IC(50)=200 nM to &gt;10 uM), Nav1.5/SCN5A (IC(50)=140 nM to &gt;10 uM) and Nav1.8/SCN10A (IC(50)=68-12200 nM). Weakly blocks the low voltage-gated calcium channels Cav3.1/CACNA1G (30% inhibition of the peak current by 9.8 nM of the toxin). It shows moderate affinity for lipid bilayers. The protein is Toxin GTx1-15 of Grammostola rosea (Chilean rose tarantula).